The chain runs to 488 residues: Ribulose bisphosphate carboxylase large chain (488 aa).

Positions 127 and 177 each coordinate substrate. The Proton acceptor role is filled by K179. K181 is a binding site for substrate. Positions 205, 207, and 208 each coordinate Mg(2+). K205 is subject to N6-carboxylysine. H297 (proton acceptor) is an active-site residue. R298, H330, and S382 together coordinate substrate.

The protein belongs to the RuBisCO large chain family. Type I subfamily. Heterohexadecamer of 8 large chains and 8 small chains. Mg(2+) is required as a cofactor.

It is found in the plastid. It localises to the chloroplast. It catalyses the reaction 2 (2R)-3-phosphoglycerate + 2 H(+) = D-ribulose 1,5-bisphosphate + CO2 + H2O. The enzyme catalyses D-ribulose 1,5-bisphosphate + O2 = 2-phosphoglycolate + (2R)-3-phosphoglycerate + 2 H(+). In terms of biological role, ruBisCO catalyzes two reactions: the carboxylation of D-ribulose 1,5-bisphosphate, the primary event in carbon dioxide fixation, as well as the oxidative fragmentation of the pentose substrate in the photorespiration process. Both reactions occur simultaneously and in competition at the same active site. This chain is Ribulose bisphosphate carboxylase large chain, found in Chrysotila carterae (Marine alga).